A 238-amino-acid chain; its full sequence is NEDD4-binding protein 2-like 1 (238 aa).

2 disordered regions span residues 1 to 36 and 183 to 212; these read MEDS…PRRH and VLHA…WNTY. The segment covering 20–31 has biased composition (pro residues); it reads QPPPRPPPARGP. The span at 192–212 shows a compositional bias: polar residues; it reads ANRNQGRNSEPSSGSGYWNTY.

In terms of assembly, interacts with dynactin subunit proteins, including DCTN4, DCTN5 and DCTN5.

Functionally, might play a role in adipocyte differentiation and triglyceride accumulation. In Mus musculus (Mouse), this protein is NEDD4-binding protein 2-like 1 (N4bp2l1).